The primary structure comprises 755 residues: Thermostable beta-glucosidase B (755 aa).

The active site involves Asp-231.

Belongs to the glycosyl hydrolase 3 family.

It carries out the reaction Hydrolysis of terminal, non-reducing beta-D-glucosyl residues with release of beta-D-glucose.. It functions in the pathway glycan metabolism; cellulose degradation. This is Thermostable beta-glucosidase B (bglB) from Acetivibrio thermocellus (strain ATCC 27405 / DSM 1237 / JCM 9322 / NBRC 103400 / NCIMB 10682 / NRRL B-4536 / VPI 7372) (Clostridium thermocellum).